The primary structure comprises 352 residues: Putative conjugal transfer protein MT3759 (352 aa).

160 to 167 (GGTGAGKT) is a binding site for ATP.

Belongs to the GSP E family.

The protein localises to the cytoplasm. This is Putative conjugal transfer protein MT3759 from Mycobacterium tuberculosis (strain CDC 1551 / Oshkosh).